Consider the following 201-residue polypeptide: Ras-related protein Rab-9A (201 aa).

Residue alanine 2 is modified to N-acetylalanine. 10 residues coordinate GTP: glycine 17, valine 18, glycine 19, lysine 20, serine 21, serine 22, aspartate 33, serine 34, histidine 38, and threonine 39. Serine 21 provides a ligand contact to Mg(2+). The Switch 1 motif lies at 31–42; sequence KFDSQLFHTIGV. Serine 34 carries the post-translational modification Phosphoserine. Residues threonine 39 and aspartate 62 each contribute to the Mg(2+) site. Residues 64–78 carry the Switch 2 motif; that stretch reads AGQERFRSLRTPFYR. Glycine 65, asparagine 124, lysine 125, aspartate 127, alanine 155, and lysine 156 together coordinate GTP. The residue at position 179 (serine 179) is a Phosphoserine. The residue at position 187 (threonine 187) is a Phosphothreonine. S-geranylgeranyl cysteine attachment occurs at residues cysteine 200 and cysteine 201.

The protein belongs to the small GTPase superfamily. Rab family. As to quaternary structure, interacts (preferentially in its GTP-bound form) with GCC2 (via its GRIP domain). Interacts (GTP-bound form) with SGSM1; the GDP-bound form has much lower affinity for SGSM1. Interacts with SGSM2. The GTP-bound form but not the GDP-bound form interacts with HPS4. The GTP-bound form but not the GDP-bound form interacts with BLOC-3 complex (heterodimer of HPS1 and HPS4) but does not interact with HPS1 alone. Interacts (GTP-bound form) with NDE1; two RAB9A-GTP molecules lie on the opposite sides of the NDE1 homodimer; the interaction leads to RAB9A-dynein motor tethering. Interacts (GTP-bound form) with NDEL1. Requires Mg(2+) as cofactor.

Its subcellular location is the cell membrane. It is found in the endoplasmic reticulum membrane. The protein resides in the golgi apparatus membrane. The protein localises to the late endosome. It localises to the cytoplasmic vesicle. Its subcellular location is the phagosome membrane. It is found in the phagosome. The protein resides in the cytoplasmic vesicle membrane. The protein localises to the melanosome. The enzyme catalyses GTP + H2O = GDP + phosphate + H(+). Its activity is regulated as follows. Regulated by guanine nucleotide exchange factors (GEFs) which promote the exchange of bound GDP for free GTP. Regulated by GTPase activating proteins (GAPs) which increase the GTP hydrolysis activity. Inhibited by GDP dissociation inhibitors (GDIs). The small GTPases Rab are key regulators of intracellular membrane trafficking, from the formation of transport vesicles to their fusion with membranes. Rabs cycle between an inactive GDP-bound form and an active GTP-bound form that is able to recruit to membranes different sets of downstream effectors directly responsible for vesicle formation, movement, tethering and fusion. RAB9A is involved in the transport of proteins between the endosomes and the trans-Golgi network (TGN). Specifically uses NDE1/NDEL1 as an effector to interact with the dynein motor complex in order to control retrograde trafficking of RAB9-associated late endosomes to the TGN. Involved in the recruitment of SGSM2 to melanosomes and is required for the proper trafficking of melanogenic enzymes TYR, TYRP1 and DCT/TYRP2 to melanosomes in melanocytes. This Mus musculus (Mouse) protein is Ras-related protein Rab-9A.